The chain runs to 302 residues: Lipoyl synthase (302 aa).

[4Fe-4S] cluster is bound by residues cysteine 54, cysteine 59, cysteine 65, cysteine 80, cysteine 84, cysteine 87, and serine 291. Residues 66–280 form the Radical SAM core domain; the sequence is WSRKTATYML…RIYGKSIGFK (215 aa).

It belongs to the radical SAM superfamily. Lipoyl synthase family. Requires [4Fe-4S] cluster as cofactor.

It localises to the cytoplasm. The enzyme catalyses [[Fe-S] cluster scaffold protein carrying a second [4Fe-4S](2+) cluster] + N(6)-octanoyl-L-lysyl-[protein] + 2 oxidized [2Fe-2S]-[ferredoxin] + 2 S-adenosyl-L-methionine + 4 H(+) = [[Fe-S] cluster scaffold protein] + N(6)-[(R)-dihydrolipoyl]-L-lysyl-[protein] + 4 Fe(3+) + 2 hydrogen sulfide + 2 5'-deoxyadenosine + 2 L-methionine + 2 reduced [2Fe-2S]-[ferredoxin]. It functions in the pathway protein modification; protein lipoylation via endogenous pathway; protein N(6)-(lipoyl)lysine from octanoyl-[acyl-carrier-protein]: step 2/2. Functionally, catalyzes the radical-mediated insertion of two sulfur atoms into the C-6 and C-8 positions of the octanoyl moiety bound to the lipoyl domains of lipoate-dependent enzymes, thereby converting the octanoylated domains into lipoylated derivatives. The polypeptide is Lipoyl synthase (Leptospira borgpetersenii serovar Hardjo-bovis (strain JB197)).